The sequence spans 502 residues: ATP synthase subunit alpha, chloroplastic (502 aa).

170–177 provides a ligand contact to ATP; the sequence is GDRQTGKS.

The protein belongs to the ATPase alpha/beta chains family. As to quaternary structure, F-type ATPases have 2 components, CF(1) - the catalytic core - and CF(0) - the membrane proton channel. CF(1) has five subunits: alpha(3), beta(3), gamma(1), delta(1), epsilon(1). CF(0) has four main subunits: a, b, b' and c.

It is found in the plastid. The protein resides in the chloroplast thylakoid membrane. The catalysed reaction is ATP + H2O + 4 H(+)(in) = ADP + phosphate + 5 H(+)(out). Produces ATP from ADP in the presence of a proton gradient across the membrane. The alpha chain is a regulatory subunit. The sequence is that of ATP synthase subunit alpha, chloroplastic from Guillardia theta (Cryptophyte).